The primary structure comprises 443 residues: Protein AknT (443 aa).

The protein belongs to the cytochrome P450 family.

Its function is as follows. Involved in the biosynthesis of the anthracycline antitumor agent aclacinomycin A. AknT is required for the glycosylation of aklavinone aglycone by AknS to yield aclacinomycin T (rhodosaminyl-aklavinone). This is Protein AknT from Streptomyces galilaeus.